A 113-amino-acid polypeptide reads, in one-letter code: Iron-sulfur cluster insertion protein ErpA (113 aa).

Cys41, Cys105, and Cys107 together coordinate iron-sulfur cluster.

Belongs to the HesB/IscA family. Homodimer. Iron-sulfur cluster is required as a cofactor.

Required for insertion of 4Fe-4S clusters for at least IspG. The protein is Iron-sulfur cluster insertion protein ErpA of Glaesserella parasuis serovar 5 (strain SH0165) (Haemophilus parasuis).